A 538-amino-acid chain; its full sequence is Beta-1,4-mannosyl-glycoprotein 4-beta-N-acetylglucosaminyltransferase (538 aa).

Topologically, residues 1-7 are cytoplasmic; that stretch reads MKMRRYK. The helical; Signal-anchor for type II membrane protein transmembrane segment at 8-23 threads the bilayer; sequence LFLMFCMAGLCLISFL. The Lumenal segment spans residues 24–538; it reads HFFKTLSYVT…VRGKLDTAEG (515 aa). The disordered stretch occupies residues 120–161; that stretch reads PGTRMLEKPSPGRTEEKTEVSEGSSARGPARRPMRHVLSSRE. Asn-245, Asn-263, and Asn-401 each carry an N-linked (GlcNAc...) asparagine glycan. The tract at residues 507 to 538 is disordered; sequence REPKSTVEGGRQNQGSDGRSSAVRGKLDTAEG.

This sequence belongs to the glycosyltransferase 17 family. As to quaternary structure, interacts with MGAT4D. As to expression, highly expressed in brain and kidney and to a much lesser extent in stomach, heart, intestine, uterus, testis, ovary and lung. Not present in spleen, liver and muscle. In brain, expressed in neurons of hippocampus.

Its subcellular location is the golgi apparatus membrane. The enzyme catalyses N(4)-{beta-D-GlcNAc-(1-&gt;2)-alpha-D-Man-(1-&gt;3)-[beta-D-GlcNAc-(1-&gt;2)-alpha-D-Man-(1-&gt;6)]-beta-D-Man-(1-&gt;4)-beta-D-GlcNAc-(1-&gt;4)-beta-D-GlcNAc}-L-asparaginyl-[protein] + UDP-N-acetyl-alpha-D-glucosamine = N(4)-{beta-D-GlcNAc-(1-&gt;2)-alpha-D-Man-(1-&gt;3)-[beta-D-GlcNAc-(1-&gt;4)]-[beta-D-GlcNAc-(1-&gt;2)-alpha-D-Man-(1-&gt;6)]-beta-D-Man-(1-&gt;4)-beta-D-GlcNAc-(1-&gt;4)-beta-D-GlcNAc}-L-asparaginyl-[protein] + UDP + H(+). It participates in protein modification; protein glycosylation. Its function is as follows. It is involved in the regulation of the biosynthesis and biological function of glycoprotein oligosaccharides. Catalyzes the addition of N-acetylglucosamine in beta 1-4 linkage to the beta-linked mannose of the trimannosyl core of N-linked sugar chains, called bisecting N-acetylglucosamine (GlcNAc). It is one of the most important enzymes involved in the regulation of the biosynthesis of glycoprotein oligosaccharides. The addition of this bisecting GlcNAc residue alters not only the composition, but also the conformation of the N-glycan. The introduction of the bisecting GlcNAc residue results in the suppression of further processing and elongation of N-glycans, precluding the formation of beta-1,6 GlcNAc branching, catalyzed by MGAT5 since it is unable to use the bisected oligosaccharide as a substrate. Addition of bisecting N-acetylglucosamine to CDH1/E-cadherin modulates CDH1 cell membrane location. Inhibits NeuAc-alpha-2,3-Gal-beta-1,4-GlcNAc- formation which modulates sialylation levels and plays a role in cell migration regulation. In brain, addition of bisecting N-acetylglucosamine to BACE1 blocks its lysosomal targeting in response to oxidative stress and further degradation which increases its location to early endosome and the APP cleavage. This Mus musculus (Mouse) protein is Beta-1,4-mannosyl-glycoprotein 4-beta-N-acetylglucosaminyltransferase.